The chain runs to 123 residues: Small ribosomal subunit protein uS13 (123 aa).

Residues Gly95–Lys123 are disordered.

The protein belongs to the universal ribosomal protein uS13 family. Part of the 30S ribosomal subunit. Forms a loose heterodimer with protein S19. Forms two bridges to the 50S subunit in the 70S ribosome.

In terms of biological role, located at the top of the head of the 30S subunit, it contacts several helices of the 16S rRNA. In the 70S ribosome it contacts the 23S rRNA (bridge B1a) and protein L5 of the 50S subunit (bridge B1b), connecting the 2 subunits; these bridges are implicated in subunit movement. Contacts the tRNAs in the A and P-sites. The polypeptide is Small ribosomal subunit protein uS13 (Clostridium novyi (strain NT)).